We begin with the raw amino-acid sequence, 438 residues long: UDP-N-acetylmuramoylalanine--D-glutamate ligase (438 aa).

Position 112-118 (112-118) interacts with ATP; that stretch reads GSNGKST.

The protein belongs to the MurCDEF family.

It localises to the cytoplasm. The catalysed reaction is UDP-N-acetyl-alpha-D-muramoyl-L-alanine + D-glutamate + ATP = UDP-N-acetyl-alpha-D-muramoyl-L-alanyl-D-glutamate + ADP + phosphate + H(+). It participates in cell wall biogenesis; peptidoglycan biosynthesis. In terms of biological role, cell wall formation. Catalyzes the addition of glutamate to the nucleotide precursor UDP-N-acetylmuramoyl-L-alanine (UMA). This Salmonella choleraesuis (strain SC-B67) protein is UDP-N-acetylmuramoylalanine--D-glutamate ligase.